The sequence spans 1217 residues: Valine--tRNA ligase (1217 aa).

In terms of domain architecture, GST C-terminal spans 27–155; that stretch reads NAKQQSQVWQ…ISLCEKMVPV (129 aa). The 'HIGH' region motif lies at 293–303; that stretch reads PNVTGSLHLGH. The 'KMSKS' region signature appears at 809–813; that stretch reads KMSKS. Lysine 812 contributes to the ATP binding site.

Belongs to the class-I aminoacyl-tRNA synthetase family.

The catalysed reaction is tRNA(Val) + L-valine + ATP = L-valyl-tRNA(Val) + AMP + diphosphate. The sequence is that of Valine--tRNA ligase (vars1) from Takifugu rubripes (Japanese pufferfish).